Consider the following 354-residue polypeptide: MSKVQSITRESWILSTFPEWGSWLNEEIEQEQVAPGTFAMWWLGCTGIWLKSEGGTNVCVDFWCGTGKQSHGNPLMKTGHQMQRMAGVKKLQPNLRTTPFVLDPFAIRQIDAVLATHDHNDHIDVNVAAAVMQNCADDVPFIGPQTCVDLWVGWGVPKERCIVVKPGDVVKVKDIEIHALDAFDRTALITLPADQKAAGVLPDGMDVRAVNYLFKTPGGNLYHSGDSHYSNYYAKHGNEHQIDVALGSYGENPRGITDKMTSADILRMAESLNTKVVIPFHHDIWSNFQADPQEIRVLWEMKKDRLKYGFKPFIWQVGGKFTWPLDKDNFEYHYPRGFDDCFTIEPDLPFKSFL.

Belongs to the UlaG family. It depends on a divalent metal cation as a cofactor.

The protein localises to the cytoplasm. The enzyme catalyses L-ascorbate 6-phosphate + H2O = 3-dehydro-L-gulonate 6-phosphate. It participates in cofactor degradation; L-ascorbate degradation; D-xylulose 5-phosphate from L-ascorbate: step 1/4. Functionally, probably catalyzes the hydrolysis of L-ascorbate-6-P into 3-keto-L-gulonate-6-P. Is essential for L-ascorbate utilization under anaerobic conditions. This is Probable L-ascorbate-6-phosphate lactonase UlaG from Salmonella agona (strain SL483).